The sequence spans 104 residues: Large ribosomal subunit protein bL21 (104 aa).

This sequence belongs to the bacterial ribosomal protein bL21 family. As to quaternary structure, part of the 50S ribosomal subunit. Contacts protein L20.

Its function is as follows. This protein binds to 23S rRNA in the presence of protein L20. This Tropheryma whipplei (strain Twist) (Whipple's bacillus) protein is Large ribosomal subunit protein bL21.